Here is a 196-residue protein sequence, read N- to C-terminus: ATP-dependent Clp protease proteolytic subunit (196 aa).

The active-site Nucleophile is Ser-99. His-124 is an active-site residue.

This sequence belongs to the peptidase S14 family. In terms of assembly, fourteen ClpP subunits assemble into 2 heptameric rings which stack back to back to give a disk-like structure with a central cavity, resembling the structure of eukaryotic proteasomes.

It is found in the cytoplasm. It carries out the reaction Hydrolysis of proteins to small peptides in the presence of ATP and magnesium. alpha-casein is the usual test substrate. In the absence of ATP, only oligopeptides shorter than five residues are hydrolyzed (such as succinyl-Leu-Tyr-|-NHMec, and Leu-Tyr-Leu-|-Tyr-Trp, in which cleavage of the -Tyr-|-Leu- and -Tyr-|-Trp bonds also occurs).. In terms of biological role, cleaves peptides in various proteins in a process that requires ATP hydrolysis. Has a chymotrypsin-like activity. Plays a major role in the degradation of misfolded proteins. This is ATP-dependent Clp protease proteolytic subunit from Helicobacter pylori (strain ATCC 700392 / 26695) (Campylobacter pylori).